The primary structure comprises 77 residues: UPF0349 protein lin2491 (77 aa).

It belongs to the UPF0349 family.

This chain is UPF0349 protein lin2491, found in Listeria innocua serovar 6a (strain ATCC BAA-680 / CLIP 11262).